Reading from the N-terminus, the 259-residue chain is Oxaloacetate tautomerase FMP41, mitochondrial (259 aa).

Residues E87, E89, and D121 each contribute to the Mg(2+) site.

Belongs to the FAH family. It depends on Mg(2+) as a cofactor. Requires Mn(2+) as cofactor.

Its subcellular location is the mitochondrion. The catalysed reaction is oxaloacetate = enol-oxaloacetate. Tautomerase that converts enol-oxaloacetate, a strong inhibitor of succinate dehydrogenase, to the physiological keto form of oxaloacetate. The sequence is that of Oxaloacetate tautomerase FMP41, mitochondrial from Saccharomyces cerevisiae (strain ATCC 204508 / S288c) (Baker's yeast).